A 769-amino-acid chain; its full sequence is Trehalose 6-phosphate phosphorylase (769 aa).

342-343 (WD) serves as a coordination point for substrate. Catalysis depends on E480, which acts as the Proton donor. 589 to 590 (KQ) serves as a coordination point for substrate.

The protein belongs to the glycosyl hydrolase 65 family. In terms of assembly, monomer.

The enzyme catalyses alpha,alpha-trehalose 6-phosphate + phosphate = beta-D-glucose 1-phosphate + D-glucose 6-phosphate. Its function is as follows. Catalyzes the conversion of trehalose 6-phosphate into glucose 1-phosphate and glucose 6-phosphate. The polypeptide is Trehalose 6-phosphate phosphorylase (trePP) (Lactococcus lactis subsp. lactis (strain IL1403) (Streptococcus lactis)).